Reading from the N-terminus, the 40-residue chain is Photosystem II reaction center protein J (40 aa).

A helical membrane pass occupies residues 8–28 (IPLWIIGTVAGILVIGLIGIF).

It belongs to the PsbJ family. As to quaternary structure, PSII is composed of 1 copy each of membrane proteins PsbA, PsbB, PsbC, PsbD, PsbE, PsbF, PsbH, PsbI, PsbJ, PsbK, PsbL, PsbM, PsbT, PsbX, PsbY, PsbZ, Psb30/Ycf12, at least 3 peripheral proteins of the oxygen-evolving complex and a large number of cofactors. It forms dimeric complexes.

It localises to the plastid. The protein resides in the chloroplast thylakoid membrane. One of the components of the core complex of photosystem II (PSII). PSII is a light-driven water:plastoquinone oxidoreductase that uses light energy to abstract electrons from H(2)O, generating O(2) and a proton gradient subsequently used for ATP formation. It consists of a core antenna complex that captures photons, and an electron transfer chain that converts photonic excitation into a charge separation. The protein is Photosystem II reaction center protein J of Nicotiana sylvestris (Wood tobacco).